A 358-amino-acid chain; its full sequence is Reverse gyrase subunit A (358 aa).

A Topo IA-type catalytic domain is found at 1 to 351; it reads MNATLRIRNR…KLYLELERVV (351 aa). The active-site O-(5'-phospho-DNA)-tyrosine intermediate is tyrosine 78.

It belongs to the type IA topoisomerase family. In terms of assembly, heterodimer of an RgyrA and RgyrB subunit. The topoisomerase domain is shared between the two subunits. Mg(2+) is required as a cofactor.

It localises to the cytoplasm. In terms of biological role, modifies the topological state of DNA by introducing positive supercoils in an ATP-dependent process; dATP also allows positive supercoiling. Increases the linking number in steps of +1. Only this subunit binds DNA, in isolation it does not hydrolyze ATP. Hydrolyzes ATP only in the presence of DNA. Transiently cleaves a single DNA strand and remains covalently bound to the 5' DNA end probably through a tyrosine residue. It changes linking number in steps of one, and nicks DNA preferentially at 5'-CNNN | 3'-sites with a strong preference for 4 pyrimidine residues. There are about 1000 heterodimers per cell. May be involved in rewinding the DNA strands in the regions of the chromosome that have opened up to allow transcription or replication. Its function is as follows. Reverse gyrase activity is reconstituted after incubation at 80 degrees Celsius for 5 minutes, positive supercoiling requires ATP and Mg(2+). In the presence of ATP it binds and nicks substrate but does not make closed product. This Methanopyrus kandleri (strain AV19 / DSM 6324 / JCM 9639 / NBRC 100938) protein is Reverse gyrase subunit A.